The sequence spans 299 residues: MVDKKLVVVFGGTGAQGGSVARTLLEDGTFKVRVVTRNPRKKAAKELRLQGAEVVQGDQDDQVIMELALNGAYATFIVTNYWESCSQEQEVKQGKLLADLARRLGLHYVVYSGLENIKKLTAGRLAAAHFDGKGEVEEYFRDIGVPMTSVRLPCYFENLLSHFLPQKAPDGKSYLLSLPTGDVPMDGMSVSDLGPVVLSLLKMPEKYVGQNIGLSTCRHTAEEYAALLTKHTRKVVHDAKMTPEDYEKLGFPGARDLANMFRFYALRPDRDIELTLRLNPKALTLDQWLEQHKGDFNLL.

NADP(+) is bound by residues 11–16 (GGTGAQ), 37–41 (RNPRK), 58–59 (DQ), glutamine 62, 79–81 (TNY), lysine 92, lysine 133, and 155–158 (YFEN). The interval 153 to 189 (PCYFENLLSHFLPQKAPDGKSYLLSLPTGDVPMDGMS) is interaction with ASS1.

The protein belongs to the NmrA-type oxidoreductase family. As to quaternary structure, homodimer. Interacts with ASS1. Interaction is enhanced by low NADPH/NADP(+) ratios, which results in inhibition of ASS1 activity.

The protein localises to the cytoplasm. Its subcellular location is the perinuclear region. It is found in the nucleus. Functionally, redox sensor protein. Undergoes restructuring and subcellular redistribution in response to changes in intracellular NADPH/NADP(+) levels. At low NADPH concentrations the protein is found mainly as a monomer, and binds argininosuccinate synthase (ASS1), the enzyme involved in nitric oxide synthesis. Association with ASS1 impairs its activity and reduces the production of nitric oxide, which subsecuently prevents apoptosis. Under normal NADPH concentrations, the protein is found as a dimer and hides the binding site for ASS1. The homodimer binds one molecule of NADPH. Has higher affinity for NADPH than for NADP(+). Binding to NADPH is necessary to form a stable dimer. The polypeptide is NmrA-like family domain-containing protein 1 (NMRAL1) (Homo sapiens (Human)).